A 197-amino-acid chain; its full sequence is Holliday junction branch migration complex subunit RuvA (197 aa).

The tract at residues 1-64 (MIGHLEGRLR…EDAIQLYGFR (64 aa)) is domain I. The segment at 65–143 (TVAEKDMFLR…VKKGREAEQP (79 aa)) is domain II. Residues 144–145 (AP) are flexible linker. Positions 146 to 197 (AAESSYGDAYSALVNLGYRPAEAEKALGKAIKSLGADPPVEKLLKETLRLLA) are domain III.

Belongs to the RuvA family. Homotetramer. Forms an RuvA(8)-RuvB(12)-Holliday junction (HJ) complex. HJ DNA is sandwiched between 2 RuvA tetramers; dsDNA enters through RuvA and exits via RuvB. An RuvB hexamer assembles on each DNA strand where it exits the tetramer. Each RuvB hexamer is contacted by two RuvA subunits (via domain III) on 2 adjacent RuvB subunits; this complex drives branch migration. In the full resolvosome a probable DNA-RuvA(4)-RuvB(12)-RuvC(2) complex forms which resolves the HJ.

It localises to the cytoplasm. Functionally, the RuvA-RuvB-RuvC complex processes Holliday junction (HJ) DNA during genetic recombination and DNA repair, while the RuvA-RuvB complex plays an important role in the rescue of blocked DNA replication forks via replication fork reversal (RFR). RuvA specifically binds to HJ cruciform DNA, conferring on it an open structure. The RuvB hexamer acts as an ATP-dependent pump, pulling dsDNA into and through the RuvAB complex. HJ branch migration allows RuvC to scan DNA until it finds its consensus sequence, where it cleaves and resolves the cruciform DNA. This is Holliday junction branch migration complex subunit RuvA from Syntrophobacter fumaroxidans (strain DSM 10017 / MPOB).